The following is a 256-amino-acid chain: 5-oxoprolinase subunit A (256 aa).

The protein belongs to the LamB/PxpA family. As to quaternary structure, forms a complex composed of PxpA, PxpB and PxpC.

The catalysed reaction is 5-oxo-L-proline + ATP + 2 H2O = L-glutamate + ADP + phosphate + H(+). Catalyzes the cleavage of 5-oxoproline to form L-glutamate coupled to the hydrolysis of ATP to ADP and inorganic phosphate. This is 5-oxoprolinase subunit A from Geobacillus kaustophilus (strain HTA426).